Reading from the N-terminus, the 179-residue chain is Large ribosomal subunit protein uL5 (179 aa).

Belongs to the universal ribosomal protein uL5 family. In terms of assembly, part of the 50S ribosomal subunit; part of the 5S rRNA/L5/L18/L25 subcomplex. Contacts the 5S rRNA and the P site tRNA. Forms a bridge to the 30S subunit in the 70S ribosome.

This is one of the proteins that bind and probably mediate the attachment of the 5S RNA into the large ribosomal subunit, where it forms part of the central protuberance. In the 70S ribosome it contacts protein S13 of the 30S subunit (bridge B1b), connecting the 2 subunits; this bridge is implicated in subunit movement. Contacts the P site tRNA; the 5S rRNA and some of its associated proteins might help stabilize positioning of ribosome-bound tRNAs. This is Large ribosomal subunit protein uL5 from Staphylococcus aureus (strain MW2).